The primary structure comprises 221 residues: UPF0758 protein YicR (221 aa).

In terms of domain architecture, MPN spans 99-221; it reads ALLSPEMTRE…YVSFAERGWI (123 aa). Positions 170, 172, and 183 each coordinate Zn(2+). The JAMM motif motif lies at 170-183; the sequence is HNHPSGCAEPSKAD.

It belongs to the UPF0758 family. YicR subfamily.

In Salmonella paratyphi A (strain ATCC 9150 / SARB42), this protein is UPF0758 protein YicR.